The chain runs to 398 residues: KiSS-1 receptor (398 aa).

Topologically, residues M1–P46 are extracellular. Residues N10, N18, and N28 are each glycosylated (N-linked (GlcNAc...) asparagine). The helical transmembrane segment at L47 to I67 threads the bilayer. Topologically, residues C68 to N78 are cytoplasmic. Residues F79–L101 traverse the membrane as a helical segment. Residues L102–Y120 lie on the Extracellular side of the membrane. An intrachain disulfide couples C115 to C191. The helical transmembrane segment at I121 to V138 threads the bilayer. Residues D139–R157 are Cytoplasmic-facing. A helical membrane pass occupies residues L158–L178. The Extracellular segment spans residues A179–R202. Residues A203 to C223 traverse the membrane as a helical segment. The Cytoplasmic portion of the chain corresponds to Y224–R263. Residues L264–V284 form a helical membrane-spanning segment. The Extracellular portion of the chain corresponds to L285–K305. A helical membrane pass occupies residues T306 to S328. Over H329–L398 the chain is Cytoplasmic. The disordered stretch occupies residues A341–L363.

It belongs to the G-protein coupled receptor 1 family. As to expression, most highly expressed in the pancreas, placenta and spinal cord, with lower-level of expression in peripheral blood leukocytes, kidney, lung, fetal liver, stomach, small intestine, testes, spleen, thymus, adrenal glands and lymph nodes. In the adult brain, expressed in the superior frontal gyrus, putamen, caudate nucleus, cingulate gyrus, nucleus accumbens, hippocampus, pons and amygdala, as well as the hypothalamus and pituitary. Expression levels are higher in early (7-9 weeks) than term placentas. Expression levels were increased in both early placentas and molar pregnancies and were reduced in choriocarcinoma cells. Expressed at higher levels in first trimester trophoblasts than at term of gestation. Also found in the extravillous trophoblast suggesting endocrine/paracrine activation mechanism.

Its subcellular location is the cell membrane. In terms of biological role, receptor for metastin (kisspeptin-54 or kp-54), a C-terminally amidated peptide of KiSS1. KiSS1 is a metastasis suppressor protein that suppresses metastases in malignant melanomas and in some breast carcinomas without affecting tumorigenicity. The metastasis suppressor properties may be mediated in part by cell cycle arrest and induction of apoptosis in malignant cells. The receptor is essential for normal gonadotropin-released hormone physiology and for puberty. The hypothalamic KiSS1/KISS1R system is a pivotal factor in central regulation of the gonadotropic axis at puberty and in adulthood. The receptor is also probably involved in the regulation and fine-tuning of trophoblast invasion generated by the trophoblast itself. Analysis of the transduction pathways activated by the receptor identifies coupling to phospholipase C and intracellular calcium release through pertussis toxin-insensitive G(q) proteins. This chain is KiSS-1 receptor (KISS1R), found in Homo sapiens (Human).